The primary structure comprises 311 residues: Nucleotide-binding protein Acel_1111 (311 aa).

30 to 37 is an ATP binding site; that stretch reads GLSGAGRS. 81 to 84 is a GTP binding site; it reads DVRS.

The protein belongs to the RapZ-like family.

Displays ATPase and GTPase activities. This Acidothermus cellulolyticus (strain ATCC 43068 / DSM 8971 / 11B) protein is Nucleotide-binding protein Acel_1111.